Consider the following 195-residue polypeptide: Peptidyl-tRNA hydrolase (195 aa).

Tyr18 serves as a coordination point for tRNA. His23 (proton acceptor) is an active-site residue. Positions 69, 71, and 117 each coordinate tRNA.

This sequence belongs to the PTH family. In terms of assembly, monomer.

It is found in the cytoplasm. It carries out the reaction an N-acyl-L-alpha-aminoacyl-tRNA + H2O = an N-acyl-L-amino acid + a tRNA + H(+). In terms of biological role, hydrolyzes ribosome-free peptidyl-tRNAs (with 1 or more amino acids incorporated), which drop off the ribosome during protein synthesis, or as a result of ribosome stalling. Catalyzes the release of premature peptidyl moieties from peptidyl-tRNA molecules trapped in stalled 50S ribosomal subunits, and thus maintains levels of free tRNAs and 50S ribosomes. The protein is Peptidyl-tRNA hydrolase of Nitrosomonas europaea (strain ATCC 19718 / CIP 103999 / KCTC 2705 / NBRC 14298).